A 393-amino-acid polypeptide reads, in one-letter code: Nucleosome assembly protein 1-like 1-B (393 aa).

A compositionally biased stretch (basic and acidic residues) spans 1–10; the sequence is MANIDNKEQT. A disordered region spans residues 1–38; that stretch reads MANIDNKEQTELDQQDMEDVEDVEEEETGEEANSKARQ. Acidic residues predominate over residues 11 to 30; it reads ELDQQDMEDVEDVEEEETGE. The short motif at 126–151 is the NAP1L motif element; that stretch reads YEPTEEECEWKVDEEEDIAEDLKEKA. The Nuclear localization signal motif lies at 274–280; that stretch reads IKKKQKH. The span at 347–377 shows a compositional bias: acidic residues; the sequence is AIEDDDDDYDEEGEEADDEEGEEEADEDHDP. The interval 347-393 is disordered; sequence AIEDDDDDYDEEGEEADDEEGEEEADEDHDPDFDPKKAQNPAECKQQ.

It belongs to the nucleosome assembly protein (NAP) family. In terms of assembly, forms homomultimers. Interacts with histone b4. Interacts with the B-type cyclins ccnb1 and ccnb2. Post-translationally, phosphorylated by cyclin B-cdc2 kinase complexes.

The protein resides in the cytoplasm. It is found in the nucleus. Its function is as follows. Acts as a chaperone for the linker histone to facilitate deposition of histone B4 onto linker DNA. Required for both remodeling of sperm chromatin into nucleosomes, and linker histone binding to nucleosome core dimers. Plays a role in tissue-specific gene regulation. Required for primitive hemopoiesis, acting upstream of tal1/scl. The protein is Nucleosome assembly protein 1-like 1-B (nap1l1-b) of Xenopus laevis (African clawed frog).